We begin with the raw amino-acid sequence, 430 residues long: Asparagine--tRNA ligase (430 aa).

Belongs to the class-II aminoacyl-tRNA synthetase family. Homodimer.

The protein resides in the cytoplasm. It carries out the reaction tRNA(Asn) + L-asparagine + ATP = L-asparaginyl-tRNA(Asn) + AMP + diphosphate + H(+). This is Asparagine--tRNA ligase from Staphylococcus aureus (strain MW2).